Consider the following 95-residue polypeptide: UPF0125 protein BUsg_244 (95 aa).

It belongs to the UPF0125 (RnfH) family.

This chain is UPF0125 protein BUsg_244, found in Buchnera aphidicola subsp. Schizaphis graminum (strain Sg).